A 170-amino-acid chain; its full sequence is Cathelicidin antimicrobial peptide (170 aa).

Residues 1–30 (MKTQRDGHSLGRWSLVLLLLGLVMPLAIIA) form the signal peptide. Positions 31-131 (QVLSYKEAVL…DISCDKDNKR (101 aa)) are cleaved as a propeptide — cathelin-like domain (CLD). 2 cysteine pairs are disulfide-bonded: C86-C97 and C108-C125. The tract at residues 150–162 (FKRIVQRIKDFLR) is active core.

The protein belongs to the cathelicidin family. As to quaternary structure, monomer, homodimer or homotrimer (in vitro). Oligomerizes as tetra- or hexamer in solution (in vitro). Post-translationally, the N-terminus is blocked. In terms of processing, proteolytically cleaved by proteinase PRTN3 into antibacterial peptide LL-37. Proteolytically cleaved by cathepsin CTSG and neutrophil elastase ELANE. Resistant to proteolytic degradation in solution, and when bound to both zwitterionic (mimicking mammalian membranes) and negatively charged membranes (mimicking bacterial membranes). Post-translationally, after secretion onto the skin surface, the CAMP gene product is processed by a serine protease-dependent mechanism into multiple novel antimicrobial peptides distinct from and shorter than cathelicidin LL-37, such as peptides KR-20 (residues 151-170), LL-23 (residues 134-156), LL-29 (residues 134-162), KS-30 (residues 141-170), RK-31 (residues 140-170) and FF-33 (residues 138-170). The peptides act synergistically, killing bacteria at lower concentrations when present together, and maintain activity at increased salt condition. As to expression, expressed in neutrophilic granulocytes (at protein level). Expressed in bone marrow. In terms of tissue distribution, expressed in granulocytes (at protein level). Expressed by the eccrine apparatus and secreted into sweat on skin (at protein level). Expressed in bone marrow and testis.

The protein localises to the secreted. Its subcellular location is the vesicle. Antimicrobial protein that is an integral component of the innate immune system. Binds to bacterial lipopolysaccharides (LPS). Acts via neutrophil N-formyl peptide receptors to enhance the release of CXCL2. Postsecretory processing generates multiple cathelicidin antimicrobial peptides with various lengths which act as a topical antimicrobial defense in sweat on skin. The unprocessed precursor form, cathelicidin antimicrobial peptide, inhibits the growth of Gram-negative E.coli and E.aerogenes with efficiencies comparable to that of the mature peptide LL-37 (in vitro). Functionally, antimicrobial peptide that is an integral component of the innate immune system. Binds to bacterial lipopolysaccharides (LPS). Causes membrane permeabilization by forming transmembrane pores (in vitro). Causes lysis of E.coli. Exhibits antimicrobial activity against Gram-negative bacteria such as P.aeruginosa, S.typhimurium, E.aerogenes, E.coli and P.syringae, Gram-positive bacteria such as L.monocytogenes, S.epidermidis, S.pyogenes and S.aureus, as well as vancomycin-resistant enterococci (in vitro). Exhibits antimicrobial activity against methicillin-resistant S.aureus, P.mirabilis, and C.albicans in low-salt media, but not in media containing 100 mM NaCl (in vitro). Forms chiral supramolecular assemblies with quinolone signal (PQS) molecules of P.aeruginosa, which may lead to interference of bacterial quorum signaling and perturbance of bacterial biofilm formation. May form supramolecular fiber-like assemblies on bacterial membranes. Induces cytokine and chemokine production as well as TNF/TNFA and CSF2/GMCSF production in normal human keratinocytes. Exhibits hemolytic activity against red blood cells. Its function is as follows. Exhibits antimicrobial activity against E.coli and B.megaterium (in vitro). In terms of biological role, acts synergistically with peptides KS-30 and KR-31, killing bacteria such as S.aureus, E.coli and C.albicans at lower concentrations when present together, and maintains activity at increased salt condition. Does not have the ability to stimulate CXCL8/IL8 release from keratinocytes. Poorly active (MIC &gt; 150 uM) against E.coli strain K12. Is able to induce the pro-inflammatory cytokine TNF/TNFA or the chemokine CCL2/MCP1. Functionally, moderately antibacterial. Its function is as follows. Moderately antibacterial. Acts synergistically with peptides KR-20 and KR-31, killing bacteria such as S.aureus, E.coli and C.albicans at lower concentrations when present together, and maintain activity at increased salt condition. Does not have the ability to stimulate CXCL8/IL8 release from keratinocytes. In terms of biological role, acts synergistically with peptides KS-30 and KR-31, killing bacteria such as S.aureus, E.coli and C.albicans at lower concentrations when present together, and maintain activity at increased salt condition. Does not have the ability to stimulate CXCL8/IL8 release from keratinocytes. Inhibits the growth of E.coli and B.megaterium and exhibits hemolytic activity against human red blood cells. This is Cathelicidin antimicrobial peptide from Homo sapiens (Human).